The following is a 165-amino-acid chain: V-type proton ATPase 16 kDa proteolipid subunit (165 aa).

Topologically, residues 1 to 10 (MPSTFSGDET) are lumenal. Residues 11 to 33 (APFFGFLGAAAALVFSCMGAAYG) traverse the membrane as a helical segment. Over 34–55 (TAKSGVGVASMGVMRPELVMKS) the chain is Cytoplasmic. The chain crosses the membrane as a helical span at residues 56 to 76 (IVPVVMAGVLGIYGLIIAVII). The Lumenal portion of the chain corresponds to 77 to 95 (STGINPKTKSYYLFDGYAH). The helical transmembrane segment at 96–117 (LSSGLACGLAGLSAGMAIGIVG) threads the bilayer. Topologically, residues 118–129 (DAGVRANAQQPK) are cytoplasmic. A helical membrane pass occupies residues 130 to 155 (LFVGMILILIFAEALALYGLIVGIIL). Topologically, residues 156–165 (SSRAGQSRAE) are lumenal.

This sequence belongs to the V-ATPase proteolipid subunit family. V-ATPase is a heteromultimeric enzyme composed of a peripheral catalytic V1 complex (main components: subunits A, B, C, D, E, and F) attached to an integral membrane V0 proton pore complex (main component: the proteolipid protein; which is present as a hexamer that forms the proton-conducting pore).

It is found in the vacuole membrane. Functionally, proton-conducting pore forming subunit of the membrane integral V0 complex of vacuolar ATPase. V-ATPase is responsible for acidifying a variety of intracellular compartments in eukaryotic cells. This Nicotiana tabacum (Common tobacco) protein is V-type proton ATPase 16 kDa proteolipid subunit.